We begin with the raw amino-acid sequence, 86 residues long: U15-lycotoxin-Ls1d (86 aa).

Residues 1–20 (MNSKIFAVLFLLAFLSCVLS) form the signal peptide. A WAP domain is found at 21–66 (DQYCPKSSITACKKMNIRNDCCKDDDCTGGSWCCATPCGNFCKYPT). Cystine bridges form between cysteine 24-cysteine 54, cysteine 32-cysteine 58, cysteine 41-cysteine 53, cysteine 42-cysteine 80, and cysteine 47-cysteine 62.

The protein belongs to the venom protein 11 family. 01 (wap-1) subfamily. In terms of processing, contains 5 disulfide bonds. In terms of tissue distribution, expressed by the venom gland.

Its subcellular location is the secreted. In terms of biological role, has antibacterial activity. In Lycosa singoriensis (Wolf spider), this protein is U15-lycotoxin-Ls1d.